A 460-amino-acid chain; its full sequence is Sorting nexin-4 (460 aa).

The segment covering 1-16 (MTATEQQQDDFSNVSW) has biased composition (polar residues). The disordered stretch occupies residues 1–53 (MTATEQQQDDFSNVSWSEHVHDQQTRSVPDAEEPGHDMNAPGTGLERDAPSLG). A PX domain is found at 56-178 (KLECTVDTPI…TFLESPDWNA (123 aa)). Coiled coils occupy residues 238–266 (EKVIARVARREADLEVDLRDLAEQFQKLI), 306–337 (RDMQAYSIALKNLLKAREQKQLDYEQLTEYLN), and 374–403 (QARRERTRKLELRVEELTHEVESARKTSDM).

The protein belongs to the sorting nexin family. In terms of assembly, forms a complex with ATG20 and ATG17.

It localises to the cytoplasm. The protein localises to the membrane. Its subcellular location is the endosome membrane. Functionally, sorting nexin involved in the separation or division of vacuoles throughout the entire life cycle of the cells. Involved in retrieval of late-Golgi SNAREs from post-Golgi endosomes to the trans-Golgi network, for cytoplasm to vacuole transport (Cvt), and autophagy of large cargos including mitophagy, pexophagy and glycophagy. Autophagy is required for proper vegetative growth, asexual/sexual reproduction, and full virulence. Autophagy is particularly involved in the biosynthesis of deoxynivalenol (DON), an important virulence determinant. The chain is Sorting nexin-4 from Gibberella zeae (strain ATCC MYA-4620 / CBS 123657 / FGSC 9075 / NRRL 31084 / PH-1) (Wheat head blight fungus).